The sequence spans 361 residues: MSQIFNFSSGPAMLPVEVLRRAEQELCNWRGLGTSVMEISHRSKEFIQVAEEAEKDFRDLLKIPSNYKVLFCHGGARGQFAAVPLNLLGQHGKADYVDGGYWAASAIKEAQKYCTPNVIDAKTTLNGLRAISPMNSWELSDDAAYVHFCPNETIDGIAIHETPDFGDKTVVADLSSTILSTPIDVSRYGVLYAGAQKNIGPAGLTLVVVREDLLGHARKELPSILDYTVLAENDSMFNTPPTFAWYLSGLVFKWLKEQGGVGELDKRNQAKADLLYGTIDSSDFYRNDVAVANRSRMNVPFQLADAALDKLFLEESFAAGLHALKGHRVVGGMRASIYNAMPLAGVKTLTDFMIDFERRHG.

The L-glutamate site is built by serine 9 and arginine 42. Pyridoxal 5'-phosphate is bound by residues alanine 76–arginine 77, tryptophan 102, threonine 153, aspartate 173, and glutamine 196. The residue at position 197 (lysine 197) is an N6-(pyridoxal phosphate)lysine. Asparagine 238–threonine 239 is a binding site for pyridoxal 5'-phosphate.

It belongs to the class-V pyridoxal-phosphate-dependent aminotransferase family. SerC subfamily. Homodimer. It depends on pyridoxal 5'-phosphate as a cofactor.

The protein resides in the cytoplasm. The enzyme catalyses O-phospho-L-serine + 2-oxoglutarate = 3-phosphooxypyruvate + L-glutamate. It carries out the reaction 4-(phosphooxy)-L-threonine + 2-oxoglutarate = (R)-3-hydroxy-2-oxo-4-phosphooxybutanoate + L-glutamate. It participates in amino-acid biosynthesis; L-serine biosynthesis; L-serine from 3-phospho-D-glycerate: step 2/3. The protein operates within cofactor biosynthesis; pyridoxine 5'-phosphate biosynthesis; pyridoxine 5'-phosphate from D-erythrose 4-phosphate: step 3/5. Catalyzes the reversible conversion of 3-phosphohydroxypyruvate to phosphoserine and of 3-hydroxy-2-oxo-4-phosphonooxybutanoate to phosphohydroxythreonine. The sequence is that of Phosphoserine aminotransferase from Erwinia tasmaniensis (strain DSM 17950 / CFBP 7177 / CIP 109463 / NCPPB 4357 / Et1/99).